We begin with the raw amino-acid sequence, 231 residues long: Somatolactin (231 aa).

An N-terminal signal peptide occupies residues 1–24; it reads MLMFTAIQRGVWVALLWPHLLTAS. Cystine bridges form between C29–C39, C89–C205, and C222–C230. N-linked (GlcNAc...) asparagine glycosylation is found at N35 and N145.

It belongs to the somatotropin/prolactin family. As to expression, pituitary gland.

Its subcellular location is the secreted. This is Somatolactin from Siganus guttatus (Orange-spotted spinefoot).